Reading from the N-terminus, the 320-residue chain is Aurora kinase B (320 aa).

Basic and acidic residues predominate over residues 1 to 10 (MQNKENREPR). Positions 1-38 (MQNKENREPRVQQTPSAGVGPLRVEMNPDTHAVSGPGR) are disordered. The Protein kinase domain maps to 53–303 (FDIGRPLGKG…LRSVMEHPWV (251 aa)). ATP-binding positions include 59-67 (LGKGKFGNV) and lysine 82. Catalysis depends on aspartate 176, which acts as the Proton acceptor.

Belongs to the protein kinase superfamily. Ser/Thr protein kinase family. Aurora subfamily. As to quaternary structure, component of the chromosomal passenger complex (CPC).

It localises to the nucleus. Its subcellular location is the chromosome. It is found in the centromere. The protein resides in the cytoplasm. The protein localises to the cytoskeleton. It localises to the spindle. Its subcellular location is the midbody. The catalysed reaction is L-seryl-[protein] + ATP = O-phospho-L-seryl-[protein] + ADP + H(+). It catalyses the reaction L-threonyl-[protein] + ATP = O-phospho-L-threonyl-[protein] + ADP + H(+). With respect to regulation, kinase activity is stimulated by cell-cycle specific phosphorylation. In terms of biological role, serine/threonine-protein kinase component of the chromosomal passenger complex (CPC), a complex that acts as a key regulator of mitosis. The CPC complex has essential functions at the centromere in ensuring correct chromosome alignment and segregation and is required for chromatin-induced microtubule stabilization and spindle assembly. Involved in the bipolar attachment of spindle microtubules to kinetochores and is a key regulator for the onset of cytokinesis during mitosis. Required for central/midzone spindle assembly and cleavage furrow formation. Key component of the cytokinesis checkpoint, a process required to delay abscission to prevent both premature resolution of intercellular chromosome bridges and accumulation of DNA damage. Phosphorylates 'Ser-10' of histone H3 during mitosis. The protein is Aurora kinase B (aurkb) of Danio rerio (Zebrafish).